Consider the following 395-residue polypeptide: Leucine aminopeptidase 1 (395 aa).

Residues 1 to 19 form the signal peptide; that stretch reads MKHLSLLALAAVAPTTALA. A propeptide spanning residues 20–95 is cleaved from the precursor; the sequence is GVIDHQQVTF…SVKSFEQTKV (76 aa). N-linked (GlcNAc...) asparagine glycosylation occurs at N187. Zn(2+) contacts are provided by H195, D214, E253, and D280. C329 and C333 are joined by a disulfide. H362 provides a ligand contact to Zn(2+).

The protein belongs to the peptidase M28 family. M28E subfamily. Monomer. Requires Zn(2+) as cofactor.

The protein resides in the secreted. Functionally, extracellular aminopeptidase that allows assimilation of proteinaceous substrates. This Uncinocarpus reesii (strain UAMH 1704) protein is Leucine aminopeptidase 1 (LAP1).